We begin with the raw amino-acid sequence, 759 residues long: Protein zyg-11 homolog A (759 aa).

LRR repeat units lie at residues Leu204 to Lys227, Met235 to His260, and Val490 to Val513.

It belongs to the zyg-11 family.

Probably acts as a target recruitment subunit in an E3 ubiquitin ligase complex ZYGA-CUL2-elongin BC. This chain is Protein zyg-11 homolog A (ZYG11A), found in Homo sapiens (Human).